A 113-amino-acid polypeptide reads, in one-letter code: Cytochrome c oxidase subunit 7A2-like, mitochondrial (113 aa).

A mitochondrion-targeting transit peptide spans 1–54 (MYYKFSSFTQKLAGAWASEAYTPQGLKPVSTEAPPIIFATPTKLTSSVTAYDYS). Residue lysine 68 is modified to N6-acetyllysine. Residues 81–106 (PDQMLYRTTMALTLGGTIYCLIALYM) traverse the membrane as a helical segment.

It belongs to the cytochrome c oxidase VIIa family. As to quaternary structure, interacts with the mitochondrial respiratory complexes III (CIII) and IV (CIV), promoting their association.

The protein localises to the mitochondrion inner membrane. It participates in energy metabolism; oxidative phosphorylation. Functionally, assembly factor that mediates the formation of some mitochondrial respiratory supercomplexes (respirasomes), thereby promoting oxidative phosphorylation and energy metabolism. Acts as a molecular adapter that associates with both mitochondrial respiratory complexes III (CIII) and IV (CIV), promoting their association. Mediates the formation of various mitochondrial respiratory supercomplexes, such as MCIII(2)IV(2), composed of two CIII and two CIV, and the CS-respirasome (MCI(1)III(2)IV(2)), composed of one CI, two CIII and two CIV. Not involved in the formation of the canonical respirasome (MCI(1)III(2)IV(1)), composed of one CI, two CIII and one CIV. The formation of different respirasomes is important for cell adaptation to oxygen conditions and prevent metabolic exhaustion: supercomplexes mediated by COX7A2L/SCAF1 are required to maintain oxidative phosphorylation upon low oxygen conditions and promote metabolic rewiring toward glycolysis. The chain is Cytochrome c oxidase subunit 7A2-like, mitochondrial from Mus musculus (Mouse).